Here is a 168-residue protein sequence, read N- to C-terminus: Putative F-box protein At1g30945 (168 aa).

In terms of domain architecture, F-box spans 5 to 52 (KTFDSISNDLFLEILLRLSTKSIDRSRCVSKQWASILCSQDFTESEKF).

In Arabidopsis thaliana (Mouse-ear cress), this protein is Putative F-box protein At1g30945.